Reading from the N-terminus, the 668-residue chain is Acetoin catabolism regulatory protein (668 aa).

Residues 341-570 form the Sigma-54 factor interaction domain; that stretch reads LTGGDAALQL…NVLEYARAVC (230 aa). ATP-binding positions include 369–376 and 433–442; these read GETGSGKE and ADGGTLFLDE. Low complexity predominate over residues 586 to 606; that stretch reads GPAPSAALPQPGPAQSPAAAP. The segment at 586 to 611 is disordered; that stretch reads GPAPSAALPQPGPAQSPAAAPFDPHQ. Residues 630–649 constitute a DNA-binding region (H-T-H motif); sequence LSAVARQIGVSRMTLYRRME.

Its function is as follows. Required for sigma-54-dependent transcription of acoXABC. This Cupriavidus necator (strain ATCC 17699 / DSM 428 / KCTC 22496 / NCIMB 10442 / H16 / Stanier 337) (Ralstonia eutropha) protein is Acetoin catabolism regulatory protein (acoR).